Here is a 131-residue protein sequence, read N- to C-terminus: L-ectoine synthase (131 aa).

It belongs to the ectoine synthase family.

The enzyme catalyses (2S)-4-acetamido-2-aminobutanoate = L-ectoine + H2O. It participates in amine and polyamine biosynthesis; ectoine biosynthesis; L-ectoine from L-aspartate 4-semialdehyde: step 3/3. In terms of biological role, catalyzes the circularization of gamma-N-acetyl-alpha,gamma-diaminobutyric acid (ADABA) to ectoine (1,4,5,6-tetrahydro-2-methyl-4-pyrimidine carboxylic acid), which is an excellent osmoprotectant. The sequence is that of L-ectoine synthase from Bordetella bronchiseptica (strain ATCC BAA-588 / NCTC 13252 / RB50) (Alcaligenes bronchisepticus).